A 258-amino-acid polypeptide reads, in one-letter code: Distal membrane-arm assembly complex protein 2 (258 aa).

Belongs to the ATP synthase subunit s family. Interacts with incompletely assembled mitochondrial NADH:ubiquinone oxidoreductase complex (complex I).

It is found in the mitochondrion. Required for the assembly of the mitochondrial NADH:ubiquinone oxidoreductase complex (complex I). Involved in the assembly of the distal region of complex I. The protein is Distal membrane-arm assembly complex protein 2 (Dmac2) of Mus musculus (Mouse).